The sequence spans 129 residues: Ferredoxin-1 (129 aa).

In terms of domain architecture, 2Fe-2S ferredoxin-type spans 29–120; that stretch reads SDMDLDDEDY…EVKIVYNAKH (92 aa). [2Fe-2S] cluster contacts are provided by cysteine 64, cysteine 69, cysteine 72, and cysteine 103.

Belongs to the 2Fe2S plant-type ferredoxin family. [2Fe-2S] cluster serves as cofactor.

In terms of biological role, ferredoxins are iron-sulfur proteins that transfer electrons in a wide variety of metabolic reactions. This is Ferredoxin-1 (fer1) from Haloarcula marismortui (strain ATCC 43049 / DSM 3752 / JCM 8966 / VKM B-1809) (Halobacterium marismortui).